The following is a 65-amino-acid chain: UPF0434 protein PSHAa1659 (65 aa).

It belongs to the UPF0434 family.

This chain is UPF0434 protein PSHAa1659, found in Pseudoalteromonas translucida (strain TAC 125).